We begin with the raw amino-acid sequence, 196 residues long: Large ribosomal subunit protein uL14my (196 aa).

Residues 1–62 constitute a mitochondrion transit peptide; sequence MATALASKLS…TILKCVDNSC (62 aa). The interval 148–175 is disordered; it reads EKKGQNNSHGSKRKMEYNQPTGTRVFGP.

This sequence belongs to the universal ribosomal protein uL14 family. Part of the mitochondrial 50S ribosomal subunit. In terms of tissue distribution, mostly expressed in pistils and inflorescences, including floral organs and meristems, and, to a lower extent, in leaves.

Its subcellular location is the mitochondrion. Its function is as follows. Binds to 23S rRNA in mitochondrion. Required for the formation of the proximal region of the ovule primordium during floral organogenesis, thus participating in patterning and growth of ovule. Also regulates the initiation and/or maintenance of integument and embryo sac ontogenesis. Prevents inappropriate cell death in the young ovule. In Arabidopsis thaliana (Mouse-ear cress), this protein is Large ribosomal subunit protein uL14my (HLL).